The sequence spans 573 residues: MLLKNIKISNDYNIFMIIASRKPSLKDIYKIIKVSKFDEPADLIIEDASYIDIYTKRISSGNIAIASGRIAYIGDEMPLKNNDTRIIKNDFLIAPGYIEGHAHPFQIYNPVTFNEIMIRHGTSMVISDDLPIYIKMGLKNIKRFMRFMGRLPVKNFWSVRLDSQSMIDMEKFSYIKIKELLNDDYVLQAGEITGWPYIINMEKNMLKNIYNSQFLGKRIETHNPGASKNTLNRMAAAGITSDHEAITGEDVKTRLSLGYHVFLRYSSIRKDLKDELKYIIDEKLPLNRLMLTNDGSPYYNDYMGMDDLIKIAISTGLNPFDAYSMASLNPAVYYNIDGIYGGIAPGRLADMNFIRDLYNPEPVFLMLDGKIIDKEVKLDPPDWKGYGMLYKNRNIDINKINFNGSDETLFMRNQVIMDLNKYKMEDSMEIHLITKDLKRIVSSNIHGMGQFDALASSYNIEGSYIVIGSSHDLMKKALKEVIKNGGIVFNGNKNIRIELKILGIMSDKHSDDVRNITEEFRSTMRGSGYKFDDPVYSMLFLNSINLPYYRITSSGIVEVKTRKIIKKPVSLKI.

This sequence belongs to the metallo-dependent hydrolases superfamily. Adenine deaminase family.

It catalyses the reaction adenine + H2O + H(+) = hypoxanthine + NH4(+). The chain is Putative adenine deaminase PTO1085 from Picrophilus torridus (strain ATCC 700027 / DSM 9790 / JCM 10055 / NBRC 100828 / KAW 2/3).